The primary structure comprises 156 residues: Histone acetyltransferase HPA2 (156 aa).

The N-acetyltransferase domain maps to 9-156; the sequence is ITVRFVTEND…PKILYKRKGY (148 aa). 93 to 106 is an acetyl-CoA binding site; it reads LYVDENSRVKGAGG.

Belongs to the acetyltransferase family. GNAT subfamily. In terms of assembly, forms homodimers in the absence, and homotetramers in the presence of acetyl-CoA. Autoacetylates in an intermolecular reaction.

It carries out the reaction L-lysyl-[protein] + acetyl-CoA = N(6)-acetyl-L-lysyl-[protein] + CoA + H(+). In terms of biological role, N-acetyltransferase that acetylates histone H3 at 'Lys-14' and histone H4 at 'Lys-5' and 'Lys-12'. Also acetylates polyamines like putrescine, spermidine and spermine, and certain other small basic proteins like nuclear HMG proteins. The sequence is that of Histone acetyltransferase HPA2 from Saccharomyces cerevisiae (strain ATCC 204508 / S288c) (Baker's yeast).